The chain runs to 198 residues: ATP-dependent Clp protease proteolytic subunit (198 aa).

Ser-98 serves as the catalytic Nucleophile. His-123 is a catalytic residue.

The protein belongs to the peptidase S14 family. In terms of assembly, fourteen ClpP subunits assemble into 2 heptameric rings which stack back to back to give a disk-like structure with a central cavity, resembling the structure of eukaryotic proteasomes.

The protein resides in the cytoplasm. It carries out the reaction Hydrolysis of proteins to small peptides in the presence of ATP and magnesium. alpha-casein is the usual test substrate. In the absence of ATP, only oligopeptides shorter than five residues are hydrolyzed (such as succinyl-Leu-Tyr-|-NHMec, and Leu-Tyr-Leu-|-Tyr-Trp, in which cleavage of the -Tyr-|-Leu- and -Tyr-|-Trp bonds also occurs).. Cleaves peptides in various proteins in a process that requires ATP hydrolysis. Has a chymotrypsin-like activity. Plays a major role in the degradation of misfolded proteins. The polypeptide is ATP-dependent Clp protease proteolytic subunit (Halothermothrix orenii (strain H 168 / OCM 544 / DSM 9562)).